We begin with the raw amino-acid sequence, 418 residues long: 3-phosphoshikimate 1-carboxyvinyltransferase (418 aa).

3 residues coordinate 3-phosphoshikimate: lysine 26, serine 27, and arginine 31. Lysine 26 lines the phosphoenolpyruvate pocket. Phosphoenolpyruvate is bound by residues glycine 97 and arginine 125. The 3-phosphoshikimate site is built by serine 170, serine 171, glutamine 172, aspartate 297, asparagine 320, and lysine 324. Glutamine 172 serves as a coordination point for phosphoenolpyruvate. Residue aspartate 297 is the Proton acceptor of the active site. Phosphoenolpyruvate-binding residues include arginine 328, arginine 375, and lysine 400.

The protein belongs to the EPSP synthase family. In terms of assembly, monomer.

It localises to the cytoplasm. It carries out the reaction 3-phosphoshikimate + phosphoenolpyruvate = 5-O-(1-carboxyvinyl)-3-phosphoshikimate + phosphate. The protein operates within metabolic intermediate biosynthesis; chorismate biosynthesis; chorismate from D-erythrose 4-phosphate and phosphoenolpyruvate: step 6/7. Catalyzes the transfer of the enolpyruvyl moiety of phosphoenolpyruvate (PEP) to the 5-hydroxyl of shikimate-3-phosphate (S3P) to produce enolpyruvyl shikimate-3-phosphate and inorganic phosphate. This is 3-phosphoshikimate 1-carboxyvinyltransferase from Pseudomonas syringae pv. tomato (strain ATCC BAA-871 / DC3000).